The following is a 163-amino-acid chain: Putative NOL1/NOP2/Sun domain family member 5B (163 aa).

Cys93 acts as the Nucleophile in catalysis.

The protein belongs to the class I-like SAM-binding methyltransferase superfamily. RsmB/NOP family. In terms of tissue distribution, ubiquitous.

The protein is Putative NOL1/NOP2/Sun domain family member 5B (NSUN5P1) of Homo sapiens (Human).